We begin with the raw amino-acid sequence, 167 residues long: Phosphopantetheine adenylyltransferase (167 aa).

Ser-9 is a substrate binding site. Residues 9 to 10 (SF) and His-17 each bind ATP. Residues Lys-41, Leu-73, and Lys-87 each coordinate substrate. ATP-binding positions include 88–90 (GLR), Glu-98, and 123–129 (YSYLSSS).

This sequence belongs to the bacterial CoaD family. As to quaternary structure, homohexamer. The cofactor is Mg(2+).

The protein localises to the cytoplasm. It catalyses the reaction (R)-4'-phosphopantetheine + ATP + H(+) = 3'-dephospho-CoA + diphosphate. It participates in cofactor biosynthesis; coenzyme A biosynthesis; CoA from (R)-pantothenate: step 4/5. Reversibly transfers an adenylyl group from ATP to 4'-phosphopantetheine, yielding dephospho-CoA (dPCoA) and pyrophosphate. In Caldicellulosiruptor bescii (strain ATCC BAA-1888 / DSM 6725 / KCTC 15123 / Z-1320) (Anaerocellum thermophilum), this protein is Phosphopantetheine adenylyltransferase.